The sequence spans 108 residues: MKKMMTFLKKAKVKAFTLVEMLVVLLIISVLFLLFVPNLTKQKEAVNDKGKAAVVKVVESQAELYSLEKNEDASLRKLQADGRITEEQAKAYKEYHDKNGGANRKVND.

A signal peptide spans 1 to 13; sequence MKKMMTFLKKAKV. The segment at 14-39 is may be involved in polymerization of ComGC; that stretch reads KAFTLVEMLVVLLIISVLFLLFVPNL. Phe16 carries the post-translational modification N-methylphenylalanine. A helical membrane pass occupies residues 16–36; sequence FTLVEMLVVLLIISVLFLLFV.

This sequence belongs to the ComGC family. The transformation pili are flexible filaments, consisting mainly of the major pilin ComGC and smaller amounts of the minor pilins, including at least ComGD, ComGF and ComGG, and perhaps ComGE. Homodimer. Forms higher-order multimers. Interacts with ComGG; the interaction is probably direct. Undergoes proteolytic cleavage.

The protein resides in the cell membrane. It localises to the cell surface. Its subcellular location is the fimbrium. The protein localises to the secreted. Its function is as follows. Major component of the type IV-like pilus (T4P) that plays a role in transformation. Transformation pili are dynamically extended and retracted, perhaps thereby promoting DNA uptake and transformation. Required for transformation. Required for DNA binding. The polypeptide is Competence protein ComGC (Streptococcus pneumoniae (strain ATCC BAA-255 / R6)).